The chain runs to 841 residues: Protein translocase subunit SecA (841 aa).

ATP is bound by residues 79 to 80 (MF), Gln-85, 103 to 107 (GEGKT), and Asp-492. The tract at residues 786–813 (REEVVQGQTTAHQPQEGDDNKKAKKAPV) is disordered. Zn(2+) is bound by residues Cys-825, Cys-827, Cys-836, and Cys-837.

This sequence belongs to the SecA family. In terms of assembly, part of the essential Sec protein translocation apparatus which comprises SecA, SecYEG and auxiliary proteins SecDF. Other proteins may be involved. Monomer and many different homodimers can be isolated, some of which are not formed in the presence of a synthetic signal peptide. A single SecA monomer interacts with SecY in the channel. Only shows some colocalization with FloA or FloT membrane assemblies. Requires Zn(2+) as cofactor.

The protein localises to the cell membrane. Its subcellular location is the cytoplasm. It localises to the membrane raft. It carries out the reaction ATP + H2O + cellular proteinSide 1 = ADP + phosphate + cellular proteinSide 2.. Functionally, part of the Sec protein translocase complex. Interacts with the SecYEG preprotein conducting channel. Has a central role in coupling the hydrolysis of ATP to the transfer of proteins into and across the cell membrane, serving as an ATP-driven molecular motor driving the stepwise translocation of polypeptide chains across the membrane. The protein is Protein translocase subunit SecA of Bacillus subtilis (strain 168).